Consider the following 82-residue polypeptide: Savignygrin (-) (82 aa).

The first 21 residues, 1–21 (MQANIFVFAFLLLSVAVAAYG), serve as a signal peptide directing secretion. 3 cysteine pairs are disulfide-bonded: Cys26/Cys79, Cys34/Cys59, and Cys53/Cys75. A Cell attachment site motif is present at residues 35-37 (RGD).

Expressed in salivary glands.

It is found in the cytoplasmic vesicle. It localises to the secretory vesicle. Its subcellular location is the secreted. Tick salivary platelet aggregation inhibitor that plays an important part in the anti-hemostatic strategy of ticks. Inhibits platelet aggregation induced by ADP (IC(50)=130 nM), collagen, the thrombin receptor-activating peptide, and epinephrine, although platelets are activated and their shape changed. Binding to platelets is similar for resting and activated platelets (Kd=50-70 nM). Acts by specifically binding to platelet membrane glycoprotein IIb-IIIa (ITGA2B/ITGB3) in a divalent metal ion dependent manner. In contrast to many disintegrins which only interacts with the beta-3 subunit, this protein interacts with the two subunits (alpha-IIb and beta-3). Also causes disaggregation of aggregated platelets without influencing the activated spherical shape associated with aggregated platelets and causes a decrease in the number of pseudopodia on the activated platelet surface. Does not show any inhibitory activity for the different serine proteases tested. The sequence is that of Savignygrin (-) from Ornithodoros kalahariensis (Tick).